The primary structure comprises 261 residues: MRRKTVLDFAKGRGPYVWITAYDYPTAKAVDEAGVDGILVGDSLGMVLLGLPNTLGVTMEDMVRHTEAVARAKPRALVVADMPFMSYETGPEDALKNAARLIRAGADAVKLEGGAEYAHIVERLVKAGIPVMGHIGLTPQRVLTIGGFRMVGKTEEQRRKVLEDAKALRDAGAFSIVLEFVPASLAREVTQAVDIPTICIGSGPHCDGQILVLHDVIGLSERPPSFAKRYADVAAAIREAVSKYAEEVRKGLFPAREHYRE.

Mg(2+) is bound by residues Asp-42 and Asp-81. 3-methyl-2-oxobutanoate is bound by residues 42 to 43 (DS), Asp-81, and Lys-110. Glu-112 lines the Mg(2+) pocket. Glu-179 acts as the Proton acceptor in catalysis.

Belongs to the PanB family. As to quaternary structure, homodecamer; pentamer of dimers. The cofactor is Mg(2+).

It localises to the cytoplasm. It catalyses the reaction 3-methyl-2-oxobutanoate + (6R)-5,10-methylene-5,6,7,8-tetrahydrofolate + H2O = 2-dehydropantoate + (6S)-5,6,7,8-tetrahydrofolate. It participates in cofactor biosynthesis; coenzyme A biosynthesis. Catalyzes the reversible reaction in which hydroxymethyl group from 5,10-methylenetetrahydrofolate is transferred onto alpha-ketoisovalerate to form ketopantoate. This Pyrobaculum islandicum (strain DSM 4184 / JCM 9189 / GEO3) protein is 3-methyl-2-oxobutanoate hydroxymethyltransferase.